Here is a 429-residue protein sequence, read N- to C-terminus: Uterine milk protein (429 aa).

The N-terminal stretch at 1–25 (MSHRRMQLALSLVFILCGLFNSIFC) is a signal peptide. Residues N222 and N268 are each glycosylated (N-linked (GlcNAc...) asparagine).

It belongs to the serpin family. UTMP subfamily. Post-translationally, glycosylated; carries the so-called mannose 6-phosphate lysosomal recognition marker on its carbohydrate chains. Secreted by ovine endometrium under the influence of progesterone.

The polypeptide is Uterine milk protein (Ovis aries (Sheep)).